The sequence spans 433 residues: Putative purine permease YbbY (433 aa).

Residues 1–17 (MFNFAVSRESLLSGFQW) are Periplasmic-facing. The helical transmembrane segment at 18 to 38 (FFFIFCNTVVVPPTLLSAFQL) threads the bilayer. The Cytoplasmic portion of the chain corresponds to 39 to 42 (PQSS). A helical membrane pass occupies residues 43–63 (LLTLTQYAFLATALACFAQAF). Residues 64–68 (CGHRR) are Periplasmic-facing. A helical transmembrane segment spans residues 69 to 89 (AIMEGPGGLWWGTILTITLGE). The Cytoplasmic portion of the chain corresponds to 90–102 (ASRGTPINDIATS). Residues 103 to 123 (LAVGIALSGVLTMLIGFSGLG) form a helical membrane-spanning segment. Residues 124 to 130 (HRLARLF) lie on the Periplasmic side of the membrane. Residues 131–151 (TPSVMVLFMLMLGAQLTTIFF) form a helical membrane-spanning segment. The Cytoplasmic segment spans residues 152–169 (KGMLGLPFGIADPNFKIQ). Residues 170 to 190 (LPPFALSVAVMCLVLAMIIFL) form a helical membrane-spanning segment. Residues 191 to 196 (PQRFAR) lie on the Periplasmic side of the membrane. Residues 197–217 (YGLLVGTITGWLLWYFCFPSS) traverse the membrane as a helical segment. The Cytoplasmic segment spans residues 218 to 230 (HSLSGELHWQWFP). Residues 231–251 (LGSGGALSPGIILTAVITGLV) form a helical membrane-spanning segment. The Periplasmic segment spans residues 252-288 (NISNTYGAIRGTDVFYPQQGAGNTRYRRSFVATGFMT). Residues 289–309 (LITVPLAVIPFSPFVSSIGLL) form a helical membrane-spanning segment. At 310-319 (TQTGDYTRRS) the chain is on the cytoplasmic side. The chain crosses the membrane as a helical span at residues 320 to 340 (FIYGSVICLLVALVPALTRLF). Topologically, residues 341-345 (CSIPL) are periplasmic. A helical transmembrane segment spans residues 346–366 (PVSSAVMLVSYLPLLFSALVF). Residues 367–379 (SQQITFTARNIYR) are Cytoplasmic-facing. Residues 380–400 (LALPLFVGIFLMALPPVYLQD) traverse the membrane as a helical segment. The Periplasmic segment spans residues 401 to 407 (LPLTLRP). The chain crosses the membrane as a helical span at residues 408 to 428 (LLSNGLLVGILLAVLMDNLIP). Over 429-433 (WERIE) the chain is Cytoplasmic.

The protein belongs to the nucleobase:cation symporter-2 (NCS2) (TC 2.A.40) family.

It is found in the cell inner membrane. In Escherichia coli (strain K12), this protein is Putative purine permease YbbY (ybbY).